The primary structure comprises 288 residues: Transmembrane protein 163 (288 aa).

A compositionally biased stretch (basic and acidic residues) spans 1–11 (MERAPGSERRS). Residues 1-64 (MERAPGSERR…ESGQFSDGFE (64 aa)) form a disordered region. Residues 1-87 (MERAPGSERR…HEAQNYRKKA (87 aa)) are Cytoplasmic-facing. Phosphoserine is present on S11. Residues 12–24 (PPGPGVPRPPPRG) show a composition bias toward pro residues. The span at 25-42 (HAPSTAAPAPNPAPLSSS) shows a compositional bias: low complexity. The segment at 41-71 (SSMQPDEERQPRISESGQFSDGFEDRGLLES) is required for interaction with MCOLN1. 3 positions are modified to phosphoserine: S54, S56, and S60. Residues 88–108 (LWVSWLSIIVTLALAVAAFTV) form a helical membrane-spanning segment. At 109–115 (SVMRYSA) the chain is on the extracellular side. The chain crosses the membrane as a helical span at residues 116-136 (SAFGFAFDAILDVLSSAIVLW). Topologically, residues 137-149 (RYSNAAAVHSAHR) are cytoplasmic. The helical transmembrane segment at 150-170 (EYIACVILGVIFLLSSICIVV) threads the bilayer. The Extracellular segment spans residues 171 to 186 (KAIHDLSTRLLPEVDD). A helical membrane pass occupies residues 187–207 (FLFSVSILSGILCSVLAVLKF). Residues 208–216 (MLGKVLTSR) are Cytoplasmic-facing. The chain crosses the membrane as a helical span at residues 217–237 (ALITDGFNSLVGGVMGFSILL). Topologically, residues 238 to 254 (SAEVFKHNAAVWYLDGS) are extracellular. The helical transmembrane segment at 255-275 (IGVLIGLTIFAYGVKLLIDMV) threads the bilayer. Over 276 to 288 (PRVRQTRHYEMFE) the chain is Cytoplasmic.

The protein belongs to the TMEM163 family. Homodimer. Interacts with MCOLN1. Interacts with SLC30A1, SLC30A2, SLC30A3 and SLC30A4. As to expression, strongly expressed in brain. Also detected in lung, liver, kidney and spleen. Mainly expressed in the glutaminergic neuron subpopulations.

It localises to the cytoplasmic vesicle. The protein resides in the secretory vesicle. It is found in the synaptic vesicle membrane. Its subcellular location is the early endosome membrane. The protein localises to the late endosome membrane. It localises to the lysosome membrane. The protein resides in the cell membrane. The enzyme catalyses Zn(2+)(in) = Zn(2+)(out). Zinc ion transporter that mediates zinc efflux and plays a crucial role in intracellular zinc homeostasis. Binds the divalent cations Zn(2+), Ni(2+), and to a minor extent Cu(2+). Is a functional modulator of P2X purinoceptors, including P2RX1, P2RX3, P2RX4 and P2RX7. Plays a role in central nervous system development and is required for myelination, and survival and proliferation of oligodendrocytes. The protein is Transmembrane protein 163 (Tmem163) of Rattus norvegicus (Rat).